Here is a 363-residue protein sequence, read N- to C-terminus: Chorismate synthase (363 aa).

NADP(+) is bound by residues arginine 48 and arginine 54. FMN is bound by residues 125–127, 237–238, glycine 277, 292–296, and arginine 318; these read RSS, NA, and KPTSS.

This sequence belongs to the chorismate synthase family. As to quaternary structure, homotetramer. It depends on FMNH2 as a cofactor.

The catalysed reaction is 5-O-(1-carboxyvinyl)-3-phosphoshikimate = chorismate + phosphate. The protein operates within metabolic intermediate biosynthesis; chorismate biosynthesis; chorismate from D-erythrose 4-phosphate and phosphoenolpyruvate: step 7/7. Its function is as follows. Catalyzes the anti-1,4-elimination of the C-3 phosphate and the C-6 proR hydrogen from 5-enolpyruvylshikimate-3-phosphate (EPSP) to yield chorismate, which is the branch point compound that serves as the starting substrate for the three terminal pathways of aromatic amino acid biosynthesis. This reaction introduces a second double bond into the aromatic ring system. The chain is Chorismate synthase from Pseudomonas savastanoi pv. phaseolicola (strain 1448A / Race 6) (Pseudomonas syringae pv. phaseolicola (strain 1448A / Race 6)).